The chain runs to 494 residues: Putative bifunctional dihydrofolate reductase-thymidylate synthase (494 aa).

A DHFR domain is found at 1-167 (MGIGKDGTLP…IKHSFISFVR (167 aa)). 2–8 (GIGKDGT) contributes to the NADP(+) binding site. Asp16 is a binding site for substrate. NADP(+) contacts are provided by residues 40–42 (RKT) and 61–64 (LTRS). Substrate is bound at residue Ile103. NADP(+) is bound at residue 104–111 (GGGEILRQ). Residue Thr124 participates in substrate binding. The tract at residues 170–494 (KSIAEANDSS…HHKIEMKMAV (325 aa)) is thymidylate synthase. Arg231 lines the dUMP pocket. Residue Cys376 is part of the active site. DUMP is bound by residues His377, 395-399 (QRSAD), Asn407, and 437-439 (HVY).

The protein in the N-terminal section; belongs to the dihydrofolate reductase family. It in the C-terminal section; belongs to the thymidylate synthase family.

The enzyme catalyses (6S)-5,6,7,8-tetrahydrofolate + NADP(+) = 7,8-dihydrofolate + NADPH + H(+). It catalyses the reaction dUMP + (6R)-5,10-methylene-5,6,7,8-tetrahydrofolate = 7,8-dihydrofolate + dTMP. The protein operates within cofactor biosynthesis; tetrahydrofolate biosynthesis; 5,6,7,8-tetrahydrofolate from 7,8-dihydrofolate: step 1/1. Bifunctional enzyme. Involved in de novo dTMP biosynthesis. Key enzyme in folate metabolism. Can play two different roles depending on the source of dihydrofolate: de novo synthesis of tetrahydrofolate or recycling of the dihydrofolate released as one of the end products of the TS catalyzed reaction. Catalyzes an essential reaction for de novo glycine and purine synthesis, DNA precursor synthesis, and for the conversion of dUMP to dTMP. The polypeptide is Putative bifunctional dihydrofolate reductase-thymidylate synthase (Oryza sativa subsp. japonica (Rice)).